A 643-amino-acid chain; its full sequence is Uromodulin (643 aa).

Positions 1 to 26 (MKCLFSPNFMWMAAVVTSWVIIPAAT) are cleaved as a signal peptide. One can recognise an EGF-like 1 domain in the interval 32–66 (KSCSECHSNATCTVDGAATTCACQEGFTGDGLECV). Cystine bridges form between cysteine 34/cysteine 43, cysteine 37/cysteine 52, cysteine 54/cysteine 65, cysteine 71/cysteine 85, cysteine 79/cysteine 94, cysteine 96/cysteine 108, cysteine 114/cysteine 128, cysteine 122/cysteine 137, cysteine 139/cysteine 150, cysteine 152/cysteine 163, cysteine 157/cysteine 172, cysteine 176/cysteine 269, cysteine 197/cysteine 284, cysteine 219/cysteine 257, cysteine 225/cysteine 289, cysteine 250/cysteine 258, cysteine 299/cysteine 308, cysteine 302/cysteine 317, cysteine 319/cysteine 349, cysteine 337/cysteine 427, and cysteine 368/cysteine 391. Asparagine 40 carries N-linked (GlcNAc...) asparagine glycosylation. In terms of domain architecture, EGF-like 2; calcium-binding spans 67–109 (DLDECAVLGAHNCSATKSCVNTLGSYTCVCPEGFLLSSELGCE). The N-linked (GlcNAc...) asparagine glycan is linked to asparagine 78. One can recognise an EGF-like 3; calcium-binding domain in the interval 110-151 (DVDECAEPGLSRCHALATCINGEGNYSCVCPAGYLGDGRHCE). The N-linked (GlcNAc...) asparagine glycan is linked to asparagine 134. The beta hairpin stretch occupies residues 152–173 (CSPGSCGPGLDCVREGDALVCV). Positions 174–293 (DPCQVHRILD…CHLAYCTDPS (120 aa)) are D10C. An N-linked (GlcNAc...) asparagine glycan is attached at asparagine 234. N-linked (GlcNAc...) asparagine glycosylation occurs at asparagine 277. In terms of domain architecture, EGF-like 4 spans 294-325 (SVEGTCEECRVDEDCKSDNGEWHCQCKQDFNV). A glycan (N-linked (GlcNAc...) asparagine) is linked at asparagine 324. Residues 336-431 (ECGVDDIKLS…RINFACSYPL (96 aa)) are ZP-N. Residues 336 to 587 (ECGVDDIKLS…EKCRPTCPET (252 aa)) enclose the ZP domain. N-linked (GlcNAc...) asparagine glycans are attached at residues asparagine 398 and asparagine 449. Residues 432-455 (DMKVSLKTSLQPMVSALNISMGGT) form a flexible ZP-N/ZP-C linker; important for secretion and polymerization into filaments region. Residues 456-466 (GTFTVRMALFQ) form an internal hydrophobic patch (IHP) region. Positions 456–587 (GTFTVRMALF…EKCRPTCPET (132 aa)) are ZP-C. Intrachain disulfides connect cysteine 508–cysteine 568, cysteine 529–cysteine 584, and cysteine 573–cysteine 580. Asparagine 515 carries an N-linked (GlcNAc...) asparagine glycan. The essential for cleavage by HPN stretch occupies residues 588-591 (RFRS). An external hydrophobic patch (EHP); regulates polymerization into filaments region spans residues 600–608 (VLNLGPITR). A lipid anchor (GPI-anchor amidated serine) is attached at serine 621. Residues 622–643 (SLGLLQVWLPLLLSATLTLMSP) constitute a propeptide, removed in mature form.

Homodimer that then polymerizes into long filaments. The filaments can additionally assemble laterally to form a sheet. The filaments consist of a zigzag-shaped backbone with laterally protruding arms which interact with bacterial adhesin fimH. Two fimH molecules can bind to a single UMOD monomer. N-glycosylated. In terms of processing, proteolytically cleaved at a conserved C-terminal proteolytic cleavage site to generate the secreted form found in urine. This cleavage is catalyzed by HPN.

It is found in the apical cell membrane. The protein localises to the basolateral cell membrane. It localises to the cell projection. The protein resides in the cilium membrane. Its subcellular location is the secreted. Its function is as follows. Functions in biogenesis and organization of the apical membrane of epithelial cells of the thick ascending limb of Henle's loop (TALH), where it promotes formation of complex filamentous gel-like structure that may play a role in the water barrier permeability. May serve as a receptor for binding and endocytosis of cytokines (IL-1, IL-2) and TNF. Facilitates neutrophil migration across renal epithelia. Functionally, in the urine, may contribute to colloid osmotic pressure, retards passage of positively charged electrolytes, and inhibits formation of liquid containing supersaturated salts and subsequent formation of salt crystals. Protects against urinary tract infections by binding to type 1 fimbriated E.coli. Binds to bacterial adhesin fimH which mediates the stable formation of bacterial aggregates, prevents the binding of E.coli to uroplakins UPK1A and UPK1B which act as urothelial receptors for type I fimbriae, and allows for pathogen clearance through micturation. Also promotes aggregation of other bacteria including K.pneumoniae, P.aeruginosa and S.mitis and so may also protect against other uropathogens. The protein is Uromodulin (UMOD) of Bos taurus (Bovine).